A 136-amino-acid polypeptide reads, in one-letter code: MAKKSSSRLPKRKGEYTYRGKTVSELQELSLEEFAELLPSRERRSIKRGFTDGQKKVLHEFKEGKKVRTHHRDLIILPEMIGQTIEIHNGKGFVSVDLQPEMIGHRFGEFAPTRSRVSHGSAGVGATRSSKFVPLK.

The disordered stretch occupies residues 114-136; that stretch reads RSRVSHGSAGVGATRSSKFVPLK.

It belongs to the universal ribosomal protein uS19 family.

Protein S19 forms a complex with S13 that binds strongly to the 16S ribosomal RNA. The chain is Small ribosomal subunit protein uS19 from Methanosarcina barkeri (strain Fusaro / DSM 804).